Reading from the N-terminus, the 393-residue chain is Ethanol acetyltransferase 1 (393 aa).

A mitochondrion-targeting transit peptide spans 1–25; it reads MHFTRTLFNQVASKASRQLPVQKRV. In terms of domain architecture, AB hydrolase-1 spans 49–151; that stretch reads PIVFVHGIFG…GVIIDNSPIE (103 aa). Residues Ser122, Asp146, and His296 each act as charge relay system in the active site. Residues 343–354 are compositionally biased toward basic and acidic residues; the sequence is AKHAQQIEELRK. The disordered stretch occupies residues 343-393; sequence AKHAQQIEELRKVTSTSESSIPHSTQSSEQAFTENIDLARQEREHQKSVSA. The segment covering 355 to 375 has biased composition (polar residues); sequence VTSTSESSIPHSTQSSEQAFT. A compositionally biased stretch (basic and acidic residues) spans 379–393; it reads DLARQEREHQKSVSA.

The protein belongs to the AB hydrolase superfamily.

The protein localises to the mitochondrion. The enzyme catalyses ethanol + acetyl-CoA = ethyl acetate + CoA. The catalysed reaction is acetyl-CoA + H2O = acetate + CoA + H(+). It catalyses the reaction ethyl acetate + H2O = ethanol + acetate + H(+). Its function is as follows. Alcohol acetyltransferase that catalyzes the synthesis of ethyl acetate from ethanol and acetyl-CoA. Can also function as a thioesterase by hydrolyzing acetyl-CoA in the absence of ethanol, as well as esterase hydrolyzing ethyl acetate. This Wickerhamomyces ciferrii (strain ATCC 14091 / BCRC 22168 / CBS 111 / JCM 3599 / NBRC 0793 / NRRL Y-1031 F-60-10) (Yeast) protein is Ethanol acetyltransferase 1 (EAT1).